The following is a 479-amino-acid chain: Anaerobic nitric oxide reductase flavorubredoxin (479 aa).

Residues 30–210 (LRGSSYNSYL…PFSRLVTPKI (181 aa)) form a zinc metallo-hydrolase region. Residues histidine 79, glutamate 81, aspartate 83, histidine 147, aspartate 166, and histidine 227 each contribute to the Fe cation site. The region spanning 254 to 393 (ITIFYDTMSN…LCREHGREIA (140 aa)) is the Flavodoxin-like domain. Residues 260–264 (TMSNN) and 342–369 (AFGS…EMSL) each bind FMN. Positions 423 to 479 (GPRMQCSVCQWIYDPAKGEPMQDVAPGTPWSEVPDNFLCPECSLGKDVFEELASEAK) constitute a Rubredoxin-like domain. Fe cation contacts are provided by cysteine 428, cysteine 431, cysteine 461, and cysteine 464.

It in the N-terminal section; belongs to the zinc metallo-hydrolase group 3 family. In terms of assembly, homotetramer. Fe cation is required as a cofactor. It depends on FMN as a cofactor.

The protein localises to the cytoplasm. Its pathway is nitrogen metabolism; nitric oxide reduction. In terms of biological role, anaerobic nitric oxide reductase; uses NADH to detoxify nitric oxide (NO), protecting several 4Fe-4S NO-sensitive enzymes. Has at least 2 reductase partners, only one of which (NorW, flavorubredoxin reductase) has been identified. NO probably binds to the di-iron center; electrons enter from the reductase at rubredoxin and are transferred sequentially to the FMN center and the di-iron center. Also able to function as an aerobic oxygen reductase. The polypeptide is Anaerobic nitric oxide reductase flavorubredoxin (norV) (Escherichia coli (strain K12 / DH10B)).